The sequence spans 470 residues: L-fuculokinase (470 aa).

This sequence belongs to the FGGY kinase family. The cofactor is a divalent metal cation.

It catalyses the reaction L-fuculose + ATP = L-fuculose 1-phosphate + ADP + H(+). It participates in carbohydrate degradation; L-fucose degradation; L-lactaldehyde and glycerone phosphate from L-fucose: step 2/3. Functionally, catalyzes the phosphorylation of L-fuculose. The protein is L-fuculokinase of Haemophilus influenzae (strain ATCC 51907 / DSM 11121 / KW20 / Rd).